We begin with the raw amino-acid sequence, 459 residues long: ATP-dependent protease ATPase subunit HslU (459 aa).

ATP-binding positions include V18, 60 to 65, D272, E337, and R409; that span reads GVGKTE.

This sequence belongs to the ClpX chaperone family. HslU subfamily. In terms of assembly, a double ring-shaped homohexamer of HslV is capped on each side by a ring-shaped HslU homohexamer. The assembly of the HslU/HslV complex is dependent on binding of ATP.

Its subcellular location is the cytoplasm. In terms of biological role, ATPase subunit of a proteasome-like degradation complex; this subunit has chaperone activity. The binding of ATP and its subsequent hydrolysis by HslU are essential for unfolding of protein substrates subsequently hydrolyzed by HslV. HslU recognizes the N-terminal part of its protein substrates and unfolds these before they are guided to HslV for hydrolysis. The chain is ATP-dependent protease ATPase subunit HslU from Thermoanaerobacter sp. (strain X514).